A 330-amino-acid chain; its full sequence is tRNA U34 carboxymethyltransferase (330 aa).

Carboxy-S-adenosyl-L-methionine is bound by residues Lys91, Trp105, Lys110, Gly130, 152-154 (DPS), 181-182 (IE), Met196, Tyr200, and Arg315.

The protein belongs to the class I-like SAM-binding methyltransferase superfamily. CmoB family. As to quaternary structure, homotetramer.

It catalyses the reaction carboxy-S-adenosyl-L-methionine + 5-hydroxyuridine(34) in tRNA = 5-carboxymethoxyuridine(34) in tRNA + S-adenosyl-L-homocysteine + H(+). In terms of biological role, catalyzes carboxymethyl transfer from carboxy-S-adenosyl-L-methionine (Cx-SAM) to 5-hydroxyuridine (ho5U) to form 5-carboxymethoxyuridine (cmo5U) at position 34 in tRNAs. In Shewanella oneidensis (strain ATCC 700550 / JCM 31522 / CIP 106686 / LMG 19005 / NCIMB 14063 / MR-1), this protein is tRNA U34 carboxymethyltransferase.